The sequence spans 609 residues: Alpha-fetoprotein (609 aa).

The N-terminal stretch at 1–18 (MKWVESIFLIFLLNFTES) is a signal peptide. Albumin domains follow at residues 19–210 (RTLH…ATVT), 211–402 (KELR…EELQ), and 403–601 (KYIQ…KLIS). His22 contacts Cu(2+). 8 disulfides stabilise this stretch: Cys99-Cys114, Cys113-Cys124, Cys148-Cys193, Cys192-Cys201, Cys224-Cys270, Cys269-Cys277, Cys289-Cys303, and Cys302-Cys313. Ser111, Ser115, and Ser117 each carry phosphoserine. Residue Asn251 is glycosylated (N-linked (GlcNAc...) asparagine). Ser344 carries the post-translational modification Phosphoserine. 7 disulfide bridges follow: Cys384–Cys393, Cys416–Cys462, Cys461–Cys472, Cys485–Cys501, Cys500–Cys511, Cys538–Cys583, and Cys582–Cys591. Ser444 carries the phosphoserine modification.

It belongs to the ALB/AFP/VDB family. In terms of assembly, dimeric and trimeric forms have been found in addition to the monomeric form. Post-translationally, sulfated. In terms of tissue distribution, plasma.

Its subcellular location is the secreted. Its function is as follows. Binds copper, nickel, and fatty acids as well as, and bilirubin less well than, serum albumin. This chain is Alpha-fetoprotein (AFP), found in Gorilla gorilla gorilla (Western lowland gorilla).